The primary structure comprises 545 residues: Metal transporter NRAT1 (545 aa).

Helical transmembrane passes span 51-71 (FLAH…PSNL), 84-104 (ELLW…TLAA), 128-148 (IFLW…EVLG), 155-175 (ILLK…TLLL), 188-208 (FIIA…LSYL), 234-254 (IALF…ALVL), 278-298 (LAFI…GSIC), 333-353 (VVYA…CTFA), 373-395 (LITR…PSGA), 398-418 (LIIL…IPLL), 437-457 (VVIA…FLVW), and 474-494 (GLIS…VVYL). The interval 516–545 (EAGGTPVVDASAADEDQPAPYRKDLADASM) is disordered. The segment covering 536–545 (YRKDLADASM) has biased composition (basic and acidic residues).

The protein belongs to the NRAMP (TC 2.A.55) family. As to expression, expressed at low levels in roots.

The protein localises to the cell membrane. Metal transporter that transports the trivalent cation aluminum (Al(3+)), but does not seem to transport divalent cations such as iron (Fe(2+)), manganese (Mg(2+)) or Cadmium (Cd(2+)). Involved in Al tolerance by taking up Al in root cells, where it is detoxified by chelation with organic acid anions and sequestration into the vacuoles. The protein is Metal transporter NRAT1 (NRAT1) of Oryza sativa subsp. japonica (Rice).